A 619-amino-acid chain; its full sequence is DNA mismatch repair protein MutL (619 aa).

This sequence belongs to the DNA mismatch repair MutL/HexB family.

Functionally, this protein is involved in the repair of mismatches in DNA. It is required for dam-dependent methyl-directed DNA mismatch repair. May act as a 'molecular matchmaker', a protein that promotes the formation of a stable complex between two or more DNA-binding proteins in an ATP-dependent manner without itself being part of a final effector complex. In Shewanella frigidimarina (strain NCIMB 400), this protein is DNA mismatch repair protein MutL.